Here is a 655-residue protein sequence, read N- to C-terminus: p-hydroxybenzoic acid efflux pump subunit AaeB (655 aa).

11 consecutive transmembrane segments (helical) span residues 13-33 (FAVK…HFQL), 38-58 (WAVL…GGEP), 69-89 (LRII…IAMI), 93-113 (LLMI…SSLV), 121-141 (WGLA…EPLL), 152-172 (EIVI…PRSI), 370-390 (LFWL…IAVV), 407-427 (FIYG…VIIP), 431-451 (QSML…GIEV), 459-479 (MGAL…TFHF), and 482-502 (FLDS…VILL).

The protein belongs to the aromatic acid exporter ArAE (TC 2.A.85) family.

The protein resides in the cell inner membrane. Functionally, forms an efflux pump with AaeA. Could function as a metabolic relief valve, allowing to eliminate certain compounds when they accumulate to high levels in the cell. The chain is p-hydroxybenzoic acid efflux pump subunit AaeB from Escherichia coli O7:K1 (strain IAI39 / ExPEC).